The primary structure comprises 126 residues: Large ribosomal subunit protein eL32 (126 aa).

This sequence belongs to the eukaryotic ribosomal protein eL32 family. Part of the 50S ribosomal subunit.

This is Large ribosomal subunit protein eL32 (rpl32e) from Thermococcus kodakarensis (strain ATCC BAA-918 / JCM 12380 / KOD1) (Pyrococcus kodakaraensis (strain KOD1)).